A 197-amino-acid chain; its full sequence is LexA repressor (197 aa).

Positions 28–47 form a DNA-binding region, H-T-H motif; the sequence is VREIARRFRITPRGAQLHLV. Residues Ser-119 and Lys-156 each act as for autocatalytic cleavage activity in the active site.

Belongs to the peptidase S24 family. As to quaternary structure, homodimer.

The enzyme catalyses Hydrolysis of Ala-|-Gly bond in repressor LexA.. In terms of biological role, represses a number of genes involved in the response to DNA damage (SOS response), including recA and lexA. In the presence of single-stranded DNA, RecA interacts with LexA causing an autocatalytic cleavage which disrupts the DNA-binding part of LexA, leading to derepression of the SOS regulon and eventually DNA repair. The polypeptide is LexA repressor (Thermotoga neapolitana).